A 284-amino-acid polypeptide reads, in one-letter code: Nucleotide-binding protein Sputw3181_3461 (284 aa).

8–15 (GRSGSGKS) provides a ligand contact to ATP. Residue 56-59 (DVRN) coordinates GTP.

It belongs to the RapZ-like family.

Functionally, displays ATPase and GTPase activities. The protein is Nucleotide-binding protein Sputw3181_3461 of Shewanella sp. (strain W3-18-1).